We begin with the raw amino-acid sequence, 266 residues long: Methyl-coenzyme M reductase II subunit gamma (266 aa).

Arginine 123 lines the coenzyme M pocket.

Belongs to the methyl-coenzyme M reductase gamma subunit family. As to quaternary structure, MCR is a hexamer of two alpha, two beta, and two gamma chains, forming a dimer of heterotrimers. Coenzyme F430 serves as cofactor.

The catalysed reaction is coenzyme B + methyl-coenzyme M = methane + coenzyme M-coenzyme B heterodisulfide. It functions in the pathway one-carbon metabolism; methyl-coenzyme M reduction; methane from methyl-coenzyme M: step 1/1. In terms of biological role, component of the methyl-coenzyme M reductase (MCR) I that catalyzes the reductive cleavage of methyl-coenzyme M (CoM-S-CH3 or 2-(methylthio)ethanesulfonate) using coenzyme B (CoB or 7-mercaptoheptanoylthreonine phosphate) as reductant which results in the production of methane and the mixed heterodisulfide of CoB and CoM (CoM-S-S-CoB). This is the final step in methanogenesis. This is Methyl-coenzyme M reductase II subunit gamma (mrtG) from Methanocaldococcus jannaschii (strain ATCC 43067 / DSM 2661 / JAL-1 / JCM 10045 / NBRC 100440) (Methanococcus jannaschii).